A 92-amino-acid polypeptide reads, in one-letter code: C-C motif chemokine 4-like (92 aa).

Positions 1–23 (MKLCVTVLSLLVLVAAFCSLALS) are cleaved as a signal peptide. Disulfide bonds link Cys-34/Cys-58 and Cys-35/Cys-74.

This sequence belongs to the intercrine beta (chemokine CC) family. In terms of assembly, interacts with CCR5. In terms of tissue distribution, detected in B-cells.

The protein localises to the secreted. In terms of biological role, chemokine that induces chemotaxis of cells expressing CCR5 or CCR1. Inhibits HIV replication in peripheral blood monocytes that express CCR5. The chain is C-C motif chemokine 4-like (CCL4L1) from Homo sapiens (Human).